The chain runs to 216 residues: Large ribosomal subunit protein uL1y (216 aa).

It belongs to the universal ribosomal protein uL1 family. As to quaternary structure, interacts with the GTPase NUG2.

The polypeptide is Large ribosomal subunit protein uL1y (RPL10AB) (Arabidopsis thaliana (Mouse-ear cress)).